A 530-amino-acid polypeptide reads, in one-letter code: UDP-glucuronosyltransferase 2B14 (530 aa).

An N-terminal signal peptide occupies residues 1–24; sequence MSVKHVSVLLLLLQLSCCFRTGSC. N-linked (GlcNAc...) asparagine glycosylation is found at asparagine 134 and asparagine 316. A helical transmembrane segment spans residues 494–510; it reads VVGFLVSCAAFLIFLVI.

Belongs to the UDP-glycosyltransferase family.

It is found in the microsome membrane. Its subcellular location is the endoplasmic reticulum membrane. The catalysed reaction is glucuronate acceptor + UDP-alpha-D-glucuronate = acceptor beta-D-glucuronoside + UDP + H(+). UDPGT is of major importance in the conjugation and subsequent elimination of potentially toxic xenobiotics and endogenous compounds. This Oryctolagus cuniculus (Rabbit) protein is UDP-glucuronosyltransferase 2B14 (UGT2B14).